Consider the following 177-residue polypeptide: Large ribosomal subunit protein uL5 (177 aa).

It belongs to the universal ribosomal protein uL5 family. Part of the 50S ribosomal subunit; part of the 5S rRNA/L5/L18/L25 subcomplex. Contacts the 5S rRNA and the P site tRNA. Forms a bridge to the 30S subunit in the 70S ribosome.

This is one of the proteins that bind and probably mediate the attachment of the 5S RNA into the large ribosomal subunit, where it forms part of the central protuberance. In the 70S ribosome it contacts protein S13 of the 30S subunit (bridge B1b), connecting the 2 subunits; this bridge is implicated in subunit movement. Contacts the P site tRNA; the 5S rRNA and some of its associated proteins might help stabilize positioning of ribosome-bound tRNAs. The sequence is that of Large ribosomal subunit protein uL5 from Wolbachia sp. subsp. Brugia malayi (strain TRS).